Here is a 473-residue protein sequence, read N- to C-terminus: Photosystem II CP43 reaction center protein (473 aa).

Residues 1–14 (MKTLYSLRRFYHVE) constitute a propeptide that is removed on maturation. Residue Thr-15 is modified to N-acetylthreonine. At Thr-15 the chain carries Phosphothreonine. 5 helical membrane passes run 69 to 93 (LFEVAHFVPEKPMYEQGLILLPHLA), 134 to 155 (LLGPETLEESFPFFGYVWKDRN), 178 to 200 (KALYFGGVYDTWAPGGGDVRKIT), 255 to 275 (KPFAWARRALVWSGEAYLSYS), and 291 to 312 (CFNNTAYPSEFYGPTGPEASQA). [CaMn4O5] cluster is bound at residue Glu-367. Residues 447-471 (RARAAAAGFEKGIDRDFEPVLSMTP) form a helical membrane-spanning segment.

This sequence belongs to the PsbB/PsbC family. PsbC subfamily. In terms of assembly, PSII is composed of 1 copy each of membrane proteins PsbA, PsbB, PsbC, PsbD, PsbE, PsbF, PsbH, PsbI, PsbJ, PsbK, PsbL, PsbM, PsbT, PsbX, PsbY, PsbZ, Psb30/Ycf12, at least 3 peripheral proteins of the oxygen-evolving complex and a large number of cofactors. It forms dimeric complexes. The cofactor is Binds multiple chlorophylls and provides some of the ligands for the Ca-4Mn-5O cluster of the oxygen-evolving complex. It may also provide a ligand for a Cl- that is required for oxygen evolution. PSII binds additional chlorophylls, carotenoids and specific lipids..

The protein localises to the plastid. The protein resides in the chloroplast thylakoid membrane. Functionally, one of the components of the core complex of photosystem II (PSII). It binds chlorophyll and helps catalyze the primary light-induced photochemical processes of PSII. PSII is a light-driven water:plastoquinone oxidoreductase, using light energy to abstract electrons from H(2)O, generating O(2) and a proton gradient subsequently used for ATP formation. This chain is Photosystem II CP43 reaction center protein, found in Jasminum nudiflorum (Winter jasmine).